The sequence spans 278 residues: F-box only protein 17 (278 aa).

In terms of domain architecture, F-box spans 15–62 (SLALDALPPELLVQVLSHVPPRSLVTRCRPVCRAWRDIVDGPTVWLLQ). Positions 99–275 (YCLRAPFGRN…VTHSSVRVRI (177 aa)) constitute an FBA domain.

In terms of assembly, part of a SCF (SKP1-cullin-F-box) protein ligase complex. Interacts with SKP1 and CUL1. In terms of tissue distribution, expressed in heart, skeletal muscle, liver and kidney. Expressed at lower levels in spleen and brain.

In terms of biological role, substrate-recognition component of the SCF (SKP1-CUL1-F-box protein)-type E3 ubiquitin ligase complex. Able to recognize and bind denatured glycoproteins, which are modified with complex-type oligosaccharides. Also recognizes sulfated glycans. Does not bind high-mannose glycoproteins. In Homo sapiens (Human), this protein is F-box only protein 17 (FBXO17).